The sequence spans 634 residues: Heat shock 70-related protein 1, mitochondrial (634 aa).

The transit peptide at 1–20 (MFARRVCGSAAASAACLARH) directs the protein to the mitochondrion. Residues 538–614 (SEQHAEADRV…AAATDKLQKA (77 aa)) adopt a coiled-coil conformation.

This sequence belongs to the heat shock protein 70 family.

The protein localises to the mitochondrion. The protein is Heat shock 70-related protein 1, mitochondrial (HSP70.1) of Leishmania major.